The sequence spans 83 residues: Small ribosomal subunit protein eS21 (83 aa).

The protein belongs to the eukaryotic ribosomal protein eS21 family. Component of the 40S small ribosomal subunit. Interacts with sta.

Its subcellular location is the cytoplasm. The protein localises to the cytosol. It localises to the rough endoplasmic reticulum. In terms of biological role, may be an associated component of the ribosome rather than a core structural subunit. May act as a translation initiation factor. Has a role in regulation of cell proliferation in the hematopoietic organs and the imaginal disks of larva. In Drosophila erecta (Fruit fly), this protein is Small ribosomal subunit protein eS21 (RpS21).